The chain runs to 1942 residues: Myosin-1 (1942 aa).

Positions 33–82 (DAKSSVFVVDAKESFVKATVQSREGGKVTAKTEGGTTVTVKDDQVYPMNP) constitute a Myosin N-terminal SH3-like domain. Phosphoserine is present on Ser36. Phosphothreonine occurs at positions 64 and 69. The Myosin motor domain occupies 86 to 785 (DKIEDMAMMT…LLGLLEEMRD (700 aa)). At Lys130 the chain carries N6,N6,N6-trimethyllysine. 179–186 (GESGAGKT) contributes to the ATP binding site. At Tyr389 the chain carries Phosphotyrosine. A Phosphothreonine modification is found at Thr419. Residue Tyr424 is modified to Phosphotyrosine. Ser625 is modified (phosphoserine). The interval 662-684 (LNKLMTNLRSTHPHFVRCIIPNE) is actin-binding. His760 is subject to Pros-methylhistidine. Positions 764–778 (KFGHTKVFFKAGLLG) are actin-binding. In terms of domain architecture, IQ spans 788–817 (LAQLITRTQAMCRGYLARVEYQKMVERRES). Residues 846–1942 (LLKSAETEKE…EVHTKIISEE (1097 aa)) are a coiled coil. A phosphoserine mark is found at Ser1095, Ser1099, Ser1165, Ser1240, and Ser1246. Residues 1156–1175 (RLEEAGGATSAQIEMNKKRE) form a disordered region. The residue at position 1258 (Thr1258) is a Phosphothreonine. Ser1264 bears the Phosphoserine mark. Residues Thr1268 and Thr1289 each carry the phosphothreonine modification. 4 positions are modified to phosphoserine: Ser1291, Ser1295, Ser1306, and Ser1309. Tyr1467 is subject to Phosphotyrosine. Thr1470 carries the phosphothreonine modification. A Phosphoserine modification is found at Ser1477. Tyr1495 is modified (phosphotyrosine). A Phosphoserine modification is found at Ser1498. Thr1504 is modified (phosphothreonine). Ser1517 carries the post-translational modification Phosphoserine. At Thr1520 the chain carries Phosphothreonine. Phosphoserine is present on residues Ser1545, Ser1557, Ser1577, Ser1603, Ser1606, Ser1717, and Ser1729. Residues Thr1733 and Thr1739 each carry the phosphothreonine modification. Ser1742 carries the post-translational modification Phosphoserine.

This sequence belongs to the TRAFAC class myosin-kinesin ATPase superfamily. Myosin family. As to quaternary structure, muscle myosin is a hexameric protein that consists of 2 heavy chain subunits (MHC), 2 alkali light chain subunits (MLC) and 2 regulatory light chain subunits (MLC-2). Interacts with SLC26A5. Expressed in the cochlea (at protein level). Strongly expressed in spiral ganglion neurons with axonal sprouts and supporting cells around hair cells. In the organ of Corti, it is expressed in inner and outer hair cells, and in supporting cells.

Its subcellular location is the cytoplasm. The protein resides in the myofibril. In terms of biological role, required for normal hearing. It plays a role in cochlear amplification of auditory stimuli, likely through the positive regulation of prestin (SLC26A5) activity and outer hair cell (OHC) electromotility. The chain is Myosin-1 from Mus musculus (Mouse).